A 255-amino-acid chain; its full sequence is Triosephosphate isomerase (255 aa).

A substrate-binding site is contributed by 9-11; sequence NWK. H95 acts as the Electrophile in catalysis. E167 functions as the Proton acceptor in the catalytic mechanism. Residues G173, S212, and 233–234 contribute to the substrate site; that span reads GG.

Belongs to the triosephosphate isomerase family. In terms of assembly, homodimer.

The protein localises to the cytoplasm. It catalyses the reaction D-glyceraldehyde 3-phosphate = dihydroxyacetone phosphate. It functions in the pathway carbohydrate biosynthesis; gluconeogenesis. Its pathway is carbohydrate degradation; glycolysis; D-glyceraldehyde 3-phosphate from glycerone phosphate: step 1/1. Its function is as follows. Involved in the gluconeogenesis. Catalyzes stereospecifically the conversion of dihydroxyacetone phosphate (DHAP) to D-glyceraldehyde-3-phosphate (G3P). This chain is Triosephosphate isomerase, found in Sodalis glossinidius (strain morsitans).